Here is a 625-residue protein sequence, read N- to C-terminus: DNA mismatch repair protein MutL (625 aa).

It belongs to the DNA mismatch repair MutL/HexB family.

This protein is involved in the repair of mismatches in DNA. It is required for dam-dependent methyl-directed DNA mismatch repair. May act as a 'molecular matchmaker', a protein that promotes the formation of a stable complex between two or more DNA-binding proteins in an ATP-dependent manner without itself being part of a final effector complex. The protein is DNA mismatch repair protein MutL of Xanthomonas axonopodis pv. citri (strain 306).